The following is a 520-amino-acid chain: Hydroxymethylglutaryl-CoA synthase, cytoplasmic (520 aa).

Ser-4 is subject to Phosphoserine. Residues Asp-43 and Ala-44 each coordinate (3S)-3-hydroxy-3-methylglutaryl-CoA. 44-46 provides a ligand contact to CoA; that stretch reads AGK. N6-acetyllysine is present on Lys-46. Glu-95 functions as the Proton donor/acceptor in the catalytic mechanism. Positions 129, 167, 171, 221, and 264 each coordinate (3S)-3-hydroxy-3-methylglutaryl-CoA. Cys-129 (acyl-thioester intermediate) is an active-site residue. Asn-167 lines the CoA pocket. Ser-221 contributes to the CoA binding site. The Proton donor/acceptor role is filled by His-264. Positions 269 and 273 each coordinate CoA. The (3S)-3-hydroxy-3-methylglutaryl-CoA site is built by Lys-273, Asn-343, and Ser-377. An N6-acetyllysine modification is found at Lys-273. Residues 486–520 are disordered; it reads SNTATEHIPSPAKKVPRLPATAAESESAVISNGEH. Ser-495 and Ser-516 each carry phosphoserine.

It belongs to the thiolase-like superfamily. HMG-CoA synthase family. In terms of assembly, homodimer.

Its subcellular location is the cytoplasm. The enzyme catalyses acetoacetyl-CoA + acetyl-CoA + H2O = (3S)-3-hydroxy-3-methylglutaryl-CoA + CoA + H(+). It participates in metabolic intermediate biosynthesis; (R)-mevalonate biosynthesis; (R)-mevalonate from acetyl-CoA: step 2/3. In terms of biological role, this enzyme condenses acetyl-CoA with acetoacetyl-CoA to form HMG-CoA, which is converted by HMG-CoA reductase (HMGCR) into mevalonate, a precursor for cholesterol synthesis. The protein is Hydroxymethylglutaryl-CoA synthase, cytoplasmic of Cricetulus griseus (Chinese hamster).